We begin with the raw amino-acid sequence, 320 residues long: MRQTKTGILLANLGTPDAPTSEAVKRYLKQFLSDRRVVDTPRLLWWPLLRGVILPLRSPRVAKLYQSIWMDGGSPLMVYSREQQQALAARLPDTPVALGMSYGSPSLESAVDELLASDVDHIVVLPLYPQYSCSTVGAVWDELGRILARKRRIPGISFIRDYADDGAYIDALAKSARESFARHGEPDVLLLSYHGIPQRYADEGDDYPQRCRDTTRELVSALGLPPEKVMMTFQSRFGREPWLTPYTDETLKMLGEKGTGHIQVMCPGFAADCLETLEEIAEQNREIFLEAGGKKYAYIPALNATPEHIDMMLKLTAPYR.

H194 and E275 together coordinate Fe cation.

Belongs to the ferrochelatase family. Monomer.

The protein localises to the cytoplasm. It carries out the reaction heme b + 2 H(+) = protoporphyrin IX + Fe(2+). The protein operates within porphyrin-containing compound metabolism; protoheme biosynthesis; protoheme from protoporphyrin-IX: step 1/1. Its function is as follows. Catalyzes the ferrous insertion into protoporphyrin IX. The chain is Ferrochelatase from Salmonella schwarzengrund (strain CVM19633).